A 175-amino-acid chain; its full sequence is Translation initiation factor IF-3 (175 aa).

The protein belongs to the IF-3 family. Monomer.

The protein localises to the cytoplasm. In terms of biological role, IF-3 binds to the 30S ribosomal subunit and shifts the equilibrium between 70S ribosomes and their 50S and 30S subunits in favor of the free subunits, thus enhancing the availability of 30S subunits on which protein synthesis initiation begins. This Aquifex aeolicus (strain VF5) protein is Translation initiation factor IF-3.